The primary structure comprises 258 residues: Acyl-[acyl-carrier-protein]--UDP-N-acetylglucosamine O-acyltransferase (258 aa).

This sequence belongs to the transferase hexapeptide repeat family. LpxA subfamily. In terms of assembly, homotrimer.

The protein localises to the cytoplasm. It carries out the reaction a (3R)-hydroxyacyl-[ACP] + UDP-N-acetyl-alpha-D-glucosamine = a UDP-3-O-[(3R)-3-hydroxyacyl]-N-acetyl-alpha-D-glucosamine + holo-[ACP]. It participates in glycolipid biosynthesis; lipid IV(A) biosynthesis; lipid IV(A) from (3R)-3-hydroxytetradecanoyl-[acyl-carrier-protein] and UDP-N-acetyl-alpha-D-glucosamine: step 1/6. Involved in the biosynthesis of lipid A, a phosphorylated glycolipid that anchors the lipopolysaccharide to the outer membrane of the cell. The protein is Acyl-[acyl-carrier-protein]--UDP-N-acetylglucosamine O-acyltransferase of Neisseria meningitidis serogroup C / serotype 2a (strain ATCC 700532 / DSM 15464 / FAM18).